A 513-amino-acid chain; its full sequence is NADH-quinone oxidoreductase chain 13 (513 aa).

14 helical membrane-spanning segments follow: residues 3-23 (NLLS…ALFL), 34-54 (AKWL…FVLF), 81-101 (VDGI…LTIL), 112-132 (EYMI…TALD), 133-153 (LVLF…IIGI), 164-184 (FKFF…MIAM), 211-231 (MTVV…SFAV), 250-270 (PTAG…YGFL), 277-297 (FPVA…IAIV), 312-332 (VIAY…FAAN), 340-360 (IFQM…VGVI), 383-403 (AAVF…SGFV), 418-438 (WVAL…LWLY), and 463-483 (WVFI…RLVT).

Belongs to the complex I subunit 4 family. As to quaternary structure, NDH-1 is composed of at least 14 different subunits, Nqo1 to Nqo14. The complex has a L-shaped structure, with the hydrophobic arm (subunits Nqo7, Nqo8, Nqo10 to Nqo14) embedded in the inner membrane and the hydrophilic peripheral arm (subunits Nqo1 to Nqo6, Nqo9) protruding into the bacterial cytoplasm. The hydrophilic domain contains all the redox centers.

Its subcellular location is the cell inner membrane. The enzyme catalyses a quinone + NADH + 5 H(+)(in) = a quinol + NAD(+) + 4 H(+)(out). In terms of biological role, NDH-1 shuttles electrons from NADH, via FMN and iron-sulfur (Fe-S) centers, to quinones in the respiratory chain. The immediate electron acceptor for the enzyme in this species is believed to be ubiquinone. Couples the redox reaction to proton translocation (for every two electrons transferred, four hydrogen ions are translocated across the cytoplasmic membrane), and thus conserves the redox energy in a proton gradient. The chain is NADH-quinone oxidoreductase chain 13 from Paracoccus denitrificans.